The chain runs to 352 residues: Phosphate acyltransferase (352 aa).

A compositionally biased stretch (basic and acidic residues) spans 328–339 (ESFPGDAREREG). The interval 328–352 (ESFPGDAREREGAQAPDAGTERVAS) is disordered.

This sequence belongs to the PlsX family. Homodimer. Probably interacts with PlsY.

It localises to the cytoplasm. The catalysed reaction is a fatty acyl-[ACP] + phosphate = an acyl phosphate + holo-[ACP]. The protein operates within lipid metabolism; phospholipid metabolism. Its function is as follows. Catalyzes the reversible formation of acyl-phosphate (acyl-PO(4)) from acyl-[acyl-carrier-protein] (acyl-ACP). This enzyme utilizes acyl-ACP as fatty acyl donor, but not acyl-CoA. This is Phosphate acyltransferase from Geobacter sp. (strain M21).